The following is a 244-amino-acid chain: Phosphatidylserine decarboxylase proenzyme (244 aa).

Serine 212 serves as the catalytic Schiff-base intermediate with substrate; via pyruvic acid. Serine 212 bears the Pyruvic acid (Ser); by autocatalysis mark.

Belongs to the phosphatidylserine decarboxylase family. PSD-A subfamily. Heterodimer of a large membrane-associated beta subunit and a small pyruvoyl-containing alpha subunit. Requires pyruvate as cofactor. Post-translationally, is synthesized initially as an inactive proenzyme. Formation of the active enzyme involves a self-maturation process in which the active site pyruvoyl group is generated from an internal serine residue via an autocatalytic post-translational modification. Two non-identical subunits are generated from the proenzyme in this reaction, and the pyruvate is formed at the N-terminus of the alpha chain, which is derived from the carboxyl end of the proenzyme. The post-translation cleavage follows an unusual pathway, termed non-hydrolytic serinolysis, in which the side chain hydroxyl group of the serine supplies its oxygen atom to form the C-terminus of the beta chain, while the remainder of the serine residue undergoes an oxidative deamination to produce ammonia and the pyruvoyl prosthetic group on the alpha chain.

The protein resides in the cell membrane. The catalysed reaction is a 1,2-diacyl-sn-glycero-3-phospho-L-serine + H(+) = a 1,2-diacyl-sn-glycero-3-phosphoethanolamine + CO2. Its pathway is phospholipid metabolism; phosphatidylethanolamine biosynthesis; phosphatidylethanolamine from CDP-diacylglycerol: step 2/2. In terms of biological role, catalyzes the formation of phosphatidylethanolamine (PtdEtn) from phosphatidylserine (PtdSer). This is Phosphatidylserine decarboxylase proenzyme from Granulibacter bethesdensis (strain ATCC BAA-1260 / CGDNIH1).